We begin with the raw amino-acid sequence, 382 residues long: tRNA (guanine-N(7)-)-methyltransferase non-catalytic subunit wuho (382 aa).

A disordered region spans residues 40–59; it reads VKDTDAGNEPNGNQTQPTPA. A compositionally biased stretch (polar residues) spans 49 to 59; sequence PNGNQTQPTPA. WD repeat units follow at residues 149–190 and 192–230; these read GHMS…ECFC and GHTE…ELSK.

This sequence belongs to the WD repeat TRM82 family. Forms a heterodimer with the catalytic subunit.

The protein localises to the nucleus. The protein operates within tRNA modification; N(7)-methylguanine-tRNA biosynthesis. Required for the formation of N(7)-methylguanine at position 46 (m7G46) in tRNA. In the complex, it is required to stabilize and induce conformational changes of the catalytic subunit. This is tRNA (guanine-N(7)-)-methyltransferase non-catalytic subunit wuho from Anopheles gambiae (African malaria mosquito).